We begin with the raw amino-acid sequence, 523 residues long: tRNA-2-methylthio-N(6)-dimethylallyladenosine synthase (523 aa).

The segment at 1-26 (MNEKQRLEQTGQIQTASHPADRKSDL) is disordered. Over residues 8 to 17 (EQTGQIQTAS) the composition is skewed to polar residues. The 119-residue stretch at 80–198 (RKFYIRTYGC…LPYILHEAYM (119 aa)) folds into the MTTase N-terminal domain. The [4Fe-4S] cluster site is built by cysteine 89, cysteine 125, cysteine 159, cysteine 235, cysteine 239, and cysteine 242. Residues 221–451 (RKGNIKAWVN…NALVQEIAAK (231 aa)) form the Radical SAM core domain. One can recognise a TRAM domain in the interval 454–517 (KQYEGQVVEV…TWTLTGELAN (64 aa)).

It belongs to the methylthiotransferase family. MiaB subfamily. Monomer. It depends on [4Fe-4S] cluster as a cofactor.

It localises to the cytoplasm. The enzyme catalyses N(6)-dimethylallyladenosine(37) in tRNA + (sulfur carrier)-SH + AH2 + 2 S-adenosyl-L-methionine = 2-methylsulfanyl-N(6)-dimethylallyladenosine(37) in tRNA + (sulfur carrier)-H + 5'-deoxyadenosine + L-methionine + A + S-adenosyl-L-homocysteine + 2 H(+). Functionally, catalyzes the methylthiolation of N6-(dimethylallyl)adenosine (i(6)A), leading to the formation of 2-methylthio-N6-(dimethylallyl)adenosine (ms(2)i(6)A) at position 37 in tRNAs that read codons beginning with uridine. This chain is tRNA-2-methylthio-N(6)-dimethylallyladenosine synthase, found in Geobacillus thermodenitrificans (strain NG80-2).